Reading from the N-terminus, the 155-residue chain is 3-hydroxyacyl-[acyl-carrier-protein] dehydratase FabZ (155 aa).

The active site involves histidine 58.

Belongs to the thioester dehydratase family. FabZ subfamily.

Its subcellular location is the cytoplasm. It carries out the reaction a (3R)-hydroxyacyl-[ACP] = a (2E)-enoyl-[ACP] + H2O. In terms of biological role, involved in unsaturated fatty acids biosynthesis. Catalyzes the dehydration of short chain beta-hydroxyacyl-ACPs and long chain saturated and unsaturated beta-hydroxyacyl-ACPs. This Rhizobium etli (strain CIAT 652) protein is 3-hydroxyacyl-[acyl-carrier-protein] dehydratase FabZ.